A 460-amino-acid polypeptide reads, in one-letter code: ATP synthase subunit beta (460 aa).

Position 150–157 (150–157 (GGAGVGKT)) interacts with ATP.

It belongs to the ATPase alpha/beta chains family. F-type ATPases have 2 components, CF(1) - the catalytic core - and CF(0) - the membrane proton channel. CF(1) has five subunits: alpha(3), beta(3), gamma(1), delta(1), epsilon(1). CF(0) has three main subunits: a(1), b(2) and c(9-12). The alpha and beta chains form an alternating ring which encloses part of the gamma chain. CF(1) is attached to CF(0) by a central stalk formed by the gamma and epsilon chains, while a peripheral stalk is formed by the delta and b chains.

It is found in the cell inner membrane. The enzyme catalyses ATP + H2O + 4 H(+)(in) = ADP + phosphate + 5 H(+)(out). Functionally, produces ATP from ADP in the presence of a proton gradient across the membrane. The catalytic sites are hosted primarily by the beta subunits. The chain is ATP synthase subunit beta from Salmonella gallinarum (strain 287/91 / NCTC 13346).